Consider the following 946-residue polypeptide: Probable leucine-rich repeat receptor-like protein kinase At5g49770 (946 aa).

The N-terminal stretch at 1 to 25 is a signal peptide; it reads MKMSSRIGLFKLLILLFFQIYSVYA. At 26–561 the chain is on the extracellular side; the sequence is FTDGSDFTAL…LEDSKTVSMK (536 aa). LRR repeat units lie at residues 67-91, 92-116, 118-140, 141-164, 166-191, 195-219, 221-244, 245-268, 269-293, 295-314, 316-340, 342-365, 367-387, and 389-407; these read DNRV…ISTL, SELQ…IGNL, KLTF…IGNL, EQLT…MGRL, KLYW…SLPG, LLQT…LFSS, MTLL…LGLV, QNLT…LNNL, TNLQ…SLTS, YTLD…SWIP, LNSL…LFSP, QLQT…NYSK, LDFV…ANNP, and NVML…QLSG. 3 N-linked (GlcNAc...) asparagine glycosylation sites follow: Asn-246, Asn-267, and Asn-287. N-linked (GlcNAc...) asparagine glycans are attached at residues Asn-354 and Asn-362. 4 N-linked (GlcNAc...) asparagine glycosylation sites follow: Asn-415, Asn-460, Asn-489, and Asn-514. Residues 562-582 traverse the membrane as a helical segment; it reads VIIGVVVGVVVLLLLLALAGI. Topologically, residues 583 to 946 are cytoplasmic; sequence YALRQKKRAQ…YTGVFPTPKP (364 aa). The Protein kinase domain maps to 634–908; sequence FSDANDVGGG…EVVQELESIL (275 aa). ATP-binding positions include 640–648 and Lys-662; that span reads VGGGGYGQV. Asp-758 (proton acceptor) is an active-site residue. Residues 919 to 946 form a disordered region; the sequence is SATYEEASGDPYGRDSFEYTGVFPTPKP.

Belongs to the protein kinase superfamily. Ser/Thr protein kinase family.

The protein localises to the membrane. The enzyme catalyses L-seryl-[protein] + ATP = O-phospho-L-seryl-[protein] + ADP + H(+). The catalysed reaction is L-threonyl-[protein] + ATP = O-phospho-L-threonyl-[protein] + ADP + H(+). This Arabidopsis thaliana (Mouse-ear cress) protein is Probable leucine-rich repeat receptor-like protein kinase At5g49770.